The following is a 501-amino-acid chain: Lysine--tRNA ligase (501 aa).

Mg(2+)-binding residues include Glu-404 and Glu-411.

The protein belongs to the class-II aminoacyl-tRNA synthetase family. In terms of assembly, homodimer. Mg(2+) is required as a cofactor.

It localises to the cytoplasm. The catalysed reaction is tRNA(Lys) + L-lysine + ATP = L-lysyl-tRNA(Lys) + AMP + diphosphate. The sequence is that of Lysine--tRNA ligase from Campylobacter jejuni (strain RM1221).